The primary structure comprises 166 residues: Large ribosomal subunit protein uL10 (166 aa).

This sequence belongs to the universal ribosomal protein uL10 family. Part of the ribosomal stalk of the 50S ribosomal subunit. The N-terminus interacts with L11 and the large rRNA to form the base of the stalk. The C-terminus forms an elongated spine to which L12 dimers bind in a sequential fashion forming a multimeric L10(L12)X complex.

Forms part of the ribosomal stalk, playing a central role in the interaction of the ribosome with GTP-bound translation factors. This is Large ribosomal subunit protein uL10 from Streptococcus pneumoniae (strain ATCC 700669 / Spain 23F-1).